The chain runs to 380 residues: MAPNLRKSHPLLKMVNNSLIDLPTPPNISAWWNFGSLLGICLMTQILTGLLLAMHYTADTTLAFSSVAHTCRNVQYGWLIRNLHANGASFFFICIYLHIGRGFYYGSYLYKETWNTGVILLLTLMATAFVGYVLPWGQMSFWGATVITNLFSAIPYIGQTLVEWAWGGFSVDNPTLTRFFALHFLLPFMIAGLTLVHLTFLHESGSNNPLGIVSNCDKIPFHPYFTLKDILGFTLMFLLLTTLALFSPNLLGDPENFTPANPLVTPPHIKPEWYFLFAYAILRSIPNKLGGVLALAASVLILFLAPFLHKAKQRAMTFRPLSQLLFWVLVANLFILTWVGSQPVEHPFIIIGQLASFTYFTILLILFPIIGALENKMLNY.

4 helical membrane passes run 34–54 (FGSL…LLAM), 78–99 (WLIR…YLHI), 114–134 (WNTG…GYVL), and 179–199 (FFAL…VHLT). H84 and H98 together coordinate heme b. Heme b contacts are provided by H183 and H197. An a ubiquinone-binding site is contributed by H202. Helical transmembrane passes span 227-247 (LKDI…ALFS), 289-309 (LGGV…PFLH), 321-341 (LSQL…WVGS), and 348-368 (FIII…ILFP).

Belongs to the cytochrome b family. In terms of assembly, the cytochrome bc1 complex contains 11 subunits: 3 respiratory subunits (MT-CYB, CYC1 and UQCRFS1), 2 core proteins (UQCRC1 and UQCRC2) and 6 low-molecular weight proteins (UQCRH/QCR6, UQCRB/QCR7, UQCRQ/QCR8, UQCR10/QCR9, UQCR11/QCR10 and a cleavage product of UQCRFS1). This cytochrome bc1 complex then forms a dimer. It depends on heme b as a cofactor.

The protein resides in the mitochondrion inner membrane. Its function is as follows. Component of the ubiquinol-cytochrome c reductase complex (complex III or cytochrome b-c1 complex) that is part of the mitochondrial respiratory chain. The b-c1 complex mediates electron transfer from ubiquinol to cytochrome c. Contributes to the generation of a proton gradient across the mitochondrial membrane that is then used for ATP synthesis. The polypeptide is Cytochrome b (MT-CYB) (Procellaria westlandica (Westland petrel)).